A 636-amino-acid chain; its full sequence is DNA mismatch repair protein MutL (636 aa).

The disordered stretch occupies residues 362 to 393 (RKTPEVHEEAEKPEFLVKQEAKNSEEPKNETE). The segment covering 363–393 (KTPEVHEEAEKPEFLVKQEAKNSEEPKNETE) has biased composition (basic and acidic residues).

This sequence belongs to the DNA mismatch repair MutL/HexB family.

Functionally, this protein is involved in the repair of mismatches in DNA. It is required for dam-dependent methyl-directed DNA mismatch repair. May act as a 'molecular matchmaker', a protein that promotes the formation of a stable complex between two or more DNA-binding proteins in an ATP-dependent manner without itself being part of a final effector complex. This Lactobacillus helveticus (strain DPC 4571) protein is DNA mismatch repair protein MutL.